The following is a 207-amino-acid chain: NADH-quinone oxidoreductase subunit C (207 aa).

It belongs to the complex I 30 kDa subunit family. NDH-1 is composed of 14 different subunits. Subunits NuoB, C, D, E, F, and G constitute the peripheral sector of the complex.

Its subcellular location is the cell inner membrane. It carries out the reaction a quinone + NADH + 5 H(+)(in) = a quinol + NAD(+) + 4 H(+)(out). Its function is as follows. NDH-1 shuttles electrons from NADH, via FMN and iron-sulfur (Fe-S) centers, to quinones in the respiratory chain. The immediate electron acceptor for the enzyme in this species is believed to be ubiquinone. Couples the redox reaction to proton translocation (for every two electrons transferred, four hydrogen ions are translocated across the cytoplasmic membrane), and thus conserves the redox energy in a proton gradient. This chain is NADH-quinone oxidoreductase subunit C, found in Bordetella pertussis (strain Tohama I / ATCC BAA-589 / NCTC 13251).